The chain runs to 678 residues: Glycine--tRNA ligase beta subunit (678 aa).

It belongs to the class-II aminoacyl-tRNA synthetase family. Tetramer of two alpha and two beta subunits.

It localises to the cytoplasm. The enzyme catalyses tRNA(Gly) + glycine + ATP = glycyl-tRNA(Gly) + AMP + diphosphate. The polypeptide is Glycine--tRNA ligase beta subunit (Streptococcus pneumoniae (strain 70585)).